A 291-amino-acid chain; its full sequence is Lysosomal amino acid transporter 1 homolog (291 aa).

Over 1–37 (MVWKKLGSRNFSSCPSGSIQWIWDVLGECAQDGWDEA) the chain is Lumenal. Residue Asn-10 is glycosylated (N-linked (GlcNAc...) asparagine). The region spanning 34 to 100 (WDEASVGLGL…LADQLPLQTY (67 aa)) is the PQ-loop 1 domain. Residues 38-58 (SVGLGLISILCFAASTFPQFI) traverse the membrane as a helical segment. Residues 59–71 (KAYKTGNMDQALS) are Cytoplasmic-facing. The helical transmembrane segment at 72-92 (LWFLLGWIGGDSCNLIGSFLA) threads the bilayer. Residues 93–98 (DQLPLQ) are Lumenal-facing. Residues 99-119 (TYTAVYYVLADLVMLTLYFYY) traverse the membrane as a helical segment. Residues 120 to 134 (KFRTRPSLLSAPINS) are Cytoplasmic-facing. Residues 135 to 155 (VLLFLMGMACATPLLSAAGPV) traverse the membrane as a helical segment. Over 156-182 (AAPREAFRGRALLSVESGSKPFTRQEV) the chain is Lumenal. A helical transmembrane segment spans residues 183–203 (IGFVIGSISSVLYLLSRLPQI). Residues 184-243 (GFVIGSISSVLYLLSRLPQIRTNFLRKSTQGISYSLFALVMLGNTLYGLSVLLKNPEEGQ) form the PQ-loop 2 domain. The Cytoplasmic portion of the chain corresponds to 204 to 214 (RTNFLRKSTQG). The helical transmembrane segment at 215-235 (ISYSLFALVMLGNTLYGLSVL) threads the bilayer. The Lumenal portion of the chain corresponds to 236 to 254 (LKNPEEGQSEGSYLLHHLP). Residues 255-275 (WLVGSLGVLLLDTIISIQFLV) form a helical membrane-spanning segment. Topologically, residues 276–291 (YRRSTAASELEPLLPS) are cytoplasmic. The short motif at 288-289 (LL) is the Di-leucine motif element.

This sequence belongs to the laat-1 family.

It is found in the lysosome membrane. Its function is as follows. Amino acid transporter that specifically mediates the pH-dependent export of the cationic amino acids arginine, histidine and lysine from lysosomes. The polypeptide is Lysosomal amino acid transporter 1 homolog (Homo sapiens (Human)).